Consider the following 556-residue polypeptide: Phosphomethylpyrimidine synthase (556 aa).

Residues Asn191, Met220, Tyr249, His285, 305–307 (SRG), 346–349 (DALR), and Glu385 each bind substrate. His389 provides a ligand contact to Zn(2+). Tyr412 is a binding site for substrate. His453 lines the Zn(2+) pocket. The [4Fe-4S] cluster site is built by Cys535, Cys538, and Cys543.

The protein belongs to the ThiC family. [4Fe-4S] cluster is required as a cofactor.

It carries out the reaction 5-amino-1-(5-phospho-beta-D-ribosyl)imidazole + S-adenosyl-L-methionine = 4-amino-2-methyl-5-(phosphooxymethyl)pyrimidine + CO + 5'-deoxyadenosine + formate + L-methionine + 3 H(+). Its pathway is cofactor biosynthesis; thiamine diphosphate biosynthesis. In terms of biological role, catalyzes the synthesis of the hydroxymethylpyrimidine phosphate (HMP-P) moiety of thiamine from aminoimidazole ribotide (AIR) in a radical S-adenosyl-L-methionine (SAM)-dependent reaction. The sequence is that of Phosphomethylpyrimidine synthase from Chlorobaculum tepidum (strain ATCC 49652 / DSM 12025 / NBRC 103806 / TLS) (Chlorobium tepidum).